The sequence spans 231 residues: MTVLTDKIAVVTGAGSGIGEAIATLLHEEGAKVVLAGRNKDKLQNVANQLAQDSVKVVPTDVTKKEEVDELIKMAQQTFGGLDIVINSAGQMLSSKITDYQVDEWDSMIDVNIKGTLYTAKAALPTMLEQSSGHLINIASISGFEVTKSSTIYSATKAAVHTITQGLEKELAKTGVKVTSISPGMVDTAITATYNPTDRKKLEPQDIAEAVLYALTQPKHVNVNEITVRPV.

10–34 (VVTGAGSGIGEAIATLLHEEGAKVV) is an NADP(+) binding site. Substrate is bound at residue serine 140. Tyrosine 153 (proton acceptor) is an active-site residue.

Belongs to the short-chain dehydrogenases/reductases (SDR) family.

This is an uncharacterized protein from Staphylococcus aureus (strain MRSA252).